Consider the following 216-residue polypeptide: Chaperone protein TorD (216 aa).

The protein belongs to the TorD/DmsD family. TorD subfamily.

Its subcellular location is the cytoplasm. Involved in the biogenesis of TorA. Acts on TorA before the insertion of the molybdenum cofactor and, as a result, probably favors a conformation of the apoenzyme that is competent for acquiring the cofactor. In Ferrimonas balearica (strain DSM 9799 / CCM 4581 / KCTC 23876 / PAT), this protein is Chaperone protein TorD.